A 313-amino-acid chain; its full sequence is uncharacterized protein (313 aa).

Transmembrane regions (helical) follow at residues A31–F53, L62–Y84, V104–S126, F147–V161, S166–L185, R198–F220, S225–I244, F264–F282, and P286–I308.

It localises to the cell membrane. This is an uncharacterized protein from Archaeoglobus fulgidus (strain ATCC 49558 / DSM 4304 / JCM 9628 / NBRC 100126 / VC-16).